The primary structure comprises 478 residues: MGSDERKPLLSINDGDDDFNHQDVSTKTPPIKKESLSNKFKSFLKKSMTKETLPILIYVLLYIISGVINVVLLKKLMIKFVNYGFFLSQITNYGYLPIFLVAMWYKMYCTSDVPKETRNFPQYKFVIMGLLDAINGFFVVIGGVSTSGPLQQLLNQAIIPFTMIASFIFLRERYSLFQLGGAAVILGGVIVSLIPSLVGGSSGGNILFYNFFYLISVIPGALSNVYKDIAFQSIDMDVWYLQFWDCLYQSLFGSILFPVNNWLPPPATIKFTEIIPSMRDGALCLGGKNTILPIFNGTTSTLAFGSCGINDNFVCDDCHNTWIIVLIYMTVNIAYNIFILLVLKHAGATVYSIANTVILPLTNIFFSIHFIMGAATTPFSALSVAGLLLILFGLGGYRIGSMIKKPPPDSKKDSEQQGGEGGAGDGDSSDNKNNLGDSAEIPQQIQPKTQLHLRNQFFGRLGIDIPESRYRATNIINN.

A disordered region spans residues 1-30 (MGSDERKPLLSINDGDDDFNHQDVSTKTPP). The Cytoplasmic segment spans residues 1 to 52 (MGSDERKPLLSINDGDDDFNHQDVSTKTPPIKKESLSNKFKSFLKKSMTKET). A helical transmembrane segment spans residues 53–73 (LPILIYVLLYIISGVINVVLL). The Vacuolar segment spans residues 74–83 (KKLMIKFVNY). A helical transmembrane segment spans residues 84 to 104 (GFFLSQITNYGYLPIFLVAMW). Over 105 to 124 (YKMYCTSDVPKETRNFPQYK) the chain is Cytoplasmic. The chain crosses the membrane as a helical span at residues 125–145 (FVIMGLLDAINGFFVVIGGVS). Over 146–149 (TSGP) the chain is Vacuolar. A helical membrane pass occupies residues 150 to 170 (LQQLLNQAIIPFTMIASFIFL). Over 171–178 (RERYSLFQ) the chain is Cytoplasmic. Residues 179–199 (LGGAAVILGGVIVSLIPSLVG) form a helical membrane-spanning segment. Residues 200-205 (GSSGGN) lie on the Vacuolar side of the membrane. The chain crosses the membrane as a helical span at residues 206-226 (ILFYNFFYLISVIPGALSNVY). Residues 227 to 237 (KDIAFQSIDMD) lie on the Cytoplasmic side of the membrane. The chain crosses the membrane as a helical span at residues 238-258 (VWYLQFWDCLYQSLFGSILFP). Topologically, residues 259 to 322 (VNNWLPPPAT…FVCDDCHNTW (64 aa)) are vacuolar. N-linked (GlcNAc...) asparagine glycosylation is present at Asn296. Residues 323 to 343 (IIVLIYMTVNIAYNIFILLVL) form a helical membrane-spanning segment. The Cytoplasmic segment spans residues 344 to 352 (KHAGATVYS). Residues 353-373 (IANTVILPLTNIFFSIHFIMG) traverse the membrane as a helical segment. At 374–376 (AAT) the chain is on the vacuolar side. Residues 377–397 (TPFSALSVAGLLLILFGLGGY) form a helical membrane-spanning segment. Residues 398–478 (RIGSMIKKPP…RYRATNIINN (81 aa)) are Cytoplasmic-facing. A disordered region spans residues 404–446 (KKPPPDSKKDSEQQGGEGGAGDGDSSDNKNNLGDSAEIPQQIQ). Positions 406-415 (PPPDSKKDSE) are enriched in basic and acidic residues.

This sequence belongs to the CRT-like transporter family.

Its subcellular location is the vacuole membrane. Functionally, nutrient transporter. Involved in maintaining the osmotic homeostasis of the digestive vacuole. The sequence is that of Crt homolog 3 (crtp3) from Dictyostelium discoideum (Social amoeba).